Consider the following 278-residue polypeptide: Large ribosomal subunit protein uL2 (278 aa).

Disordered stretches follow at residues 1–58 and 225–278; these read MAIR…GGGH and VMNP…KNKR. A compositionally biased stretch (basic residues) spans 37-58; it reads LHGRGGRNAHGRITTRHKGGGH. Over residues 253–267 the composition is skewed to basic and acidic residues; sequence PEGRTRKNKASDKLI. The span at 268–278 shows a compositional bias: basic residues; sequence VRRRRTGKNKR.

This sequence belongs to the universal ribosomal protein uL2 family. In terms of assembly, part of the 50S ribosomal subunit. Forms a bridge to the 30S subunit in the 70S ribosome.

Functionally, one of the primary rRNA binding proteins. Required for association of the 30S and 50S subunits to form the 70S ribosome, for tRNA binding and peptide bond formation. It has been suggested to have peptidyltransferase activity; this is somewhat controversial. Makes several contacts with the 16S rRNA in the 70S ribosome. The protein is Large ribosomal subunit protein uL2 of Rhodococcus opacus (strain B4).